The sequence spans 348 residues: D-erythrose-4-phosphate dehydrogenase (348 aa).

Residues 12–13 (RI) and arginine 81 contribute to the NAD(+) site. Substrate-binding positions include 154–156 (SCT), arginine 200, 213–214 (TK), and arginine 236. The Nucleophile role is filled by cysteine 155. An NAD(+)-binding site is contributed by asparagine 318.

Belongs to the glyceraldehyde-3-phosphate dehydrogenase family. Epd subfamily. As to quaternary structure, homotetramer.

The protein localises to the cytoplasm. The catalysed reaction is D-erythrose 4-phosphate + NAD(+) + H2O = 4-phospho-D-erythronate + NADH + 2 H(+). It participates in cofactor biosynthesis; pyridoxine 5'-phosphate biosynthesis; pyridoxine 5'-phosphate from D-erythrose 4-phosphate: step 1/5. Functionally, catalyzes the NAD-dependent conversion of D-erythrose 4-phosphate to 4-phosphoerythronate. The sequence is that of D-erythrose-4-phosphate dehydrogenase from Salmonella paratyphi B (strain ATCC BAA-1250 / SPB7).